A 253-amino-acid polypeptide reads, in one-letter code: Probable transcriptional regulatory protein Tpet_0454 (253 aa).

It belongs to the TACO1 family.

The protein resides in the cytoplasm. This is Probable transcriptional regulatory protein Tpet_0454 from Thermotoga petrophila (strain ATCC BAA-488 / DSM 13995 / JCM 10881 / RKU-1).